A 281-amino-acid polypeptide reads, in one-letter code: Glycerol uptake facilitator protein (281 aa).

Over 1-5 the chain is Cytoplasmic; sequence MSQTS. The helical transmembrane segment at 6 to 34 threads the bilayer; sequence TLKGQCIAEFLGTGLLIFFGVGCVAALKV. The Periplasmic portion of the chain corresponds to 35 to 39; it reads AGASF. Residues 40 to 60 form a helical membrane-spanning segment; sequence GQWEISVIWGLGVAMAIYLTA. Residues 61 to 63 lie on the Cytoplasmic side of the membrane; the sequence is GVS. The stretch at 64–67 is an intramembrane region; it reads GAHL. The short motif at 68–70 is the NPA 1 element; it reads NPA. The segment at residues 68–78 is an intramembrane region (helical); the sequence is NPAVTIALWLF. At 79 to 84 the chain is on the cytoplasmic side; the sequence is ACFDKR. A helical transmembrane segment spans residues 85–108; the sequence is KVIPFIVSQVAGAFCAAALVYGLY. The Periplasmic segment spans residues 109-143; it reads YNLFFDFEQTHHIVRGSVESVDLAGTFSTYPNPHI. The helical transmembrane segment at 144-169 threads the bilayer; that stretch reads NFVQAFAVEMVITAILMGLILALTDD. Residues 170–177 lie on the Cytoplasmic side of the membrane; that stretch reads GNGVPRGP. The chain crosses the membrane as a helical span at residues 178–194; it reads LAPLLIGLLIAVIGASM. At 195-198 the chain is on the periplasmic side; that stretch reads GPLT. An intramembrane segment occupies 199 to 202; it reads GFAM. An NPA 2 motif is present at residues 203-205; the sequence is NPA. The helical intramembrane region spans 203–216; it reads NPARDFGPKVFAWL. Over 217–231 the chain is Periplasmic; the sequence is AGWGNVAFTGGRDIP. The helical transmembrane segment at 232-254 threads the bilayer; it reads YFLVPLFGPIVGAIVGAFAYRKL. Residues 255–281 are Cytoplasmic-facing; it reads IGRHLPCDICVVEEKETTTPSEQKASL.

It belongs to the MIP/aquaporin (TC 1.A.8) family. As to quaternary structure, homotetramer.

Its subcellular location is the cell inner membrane. It catalyses the reaction glycerol(in) = glycerol(out). Its function is as follows. Mediates glycerol diffusion across the cytoplasmic membrane via a pore-type mechanism. The chain is Glycerol uptake facilitator protein (glpF) from Escherichia coli O157:H7.